The chain runs to 171 residues: S-ribosylhomocysteine lyase (171 aa).

The Fe cation site is built by histidine 54, histidine 58, and cysteine 128.

Belongs to the LuxS family. As to quaternary structure, homodimer. Requires Fe cation as cofactor.

It catalyses the reaction S-(5-deoxy-D-ribos-5-yl)-L-homocysteine = (S)-4,5-dihydroxypentane-2,3-dione + L-homocysteine. Involved in the synthesis of autoinducer 2 (AI-2) which is secreted by bacteria and is used to communicate both the cell density and the metabolic potential of the environment. The regulation of gene expression in response to changes in cell density is called quorum sensing. Catalyzes the transformation of S-ribosylhomocysteine (RHC) to homocysteine (HC) and 4,5-dihydroxy-2,3-pentadione (DPD). In Shigella flexneri, this protein is S-ribosylhomocysteine lyase.